The following is a 234-amino-acid chain: DNA repair protein RecO (234 aa).

It belongs to the RecO family.

Functionally, involved in DNA repair and RecF pathway recombination. The protein is DNA repair protein RecO of Idiomarina loihiensis (strain ATCC BAA-735 / DSM 15497 / L2-TR).